The following is a 146-amino-acid chain: Large ribosomal subunit protein uL15 (146 aa).

The interval 1-54 (MNLTDLRPADGSKQSGNFRRGRGHGSGNGKTAGKGHKGQKARSGAPRVGFEGGQ) is disordered.

The protein belongs to the universal ribosomal protein uL15 family. Part of the 50S ribosomal subunit.

In terms of biological role, binds to the 23S rRNA. The sequence is that of Large ribosomal subunit protein uL15 from Lachnoclostridium phytofermentans (strain ATCC 700394 / DSM 18823 / ISDg) (Clostridium phytofermentans).